A 63-amino-acid chain; its full sequence is MRCVPVFIILLLLIPSAPSADAQPKTKDDVPLASYHDNAERTLQRLWNQRHCCPIDLPCCPPG.

The N-terminal stretch at 1–22 (MRCVPVFIILLLLIPSAPSADA) is a signal peptide. The propeptide occupies 23-50 (QPKTKDDVPLASYHDNAERTLQRLWNQR). Position 62 is a proline amide (P62).

The protein belongs to the conotoxin T superfamily. Contains 2 disulfide bonds that can be either 'C1-C3, C2-C4' or 'C1-C4, C2-C3', since these disulfide connectivities have been observed for conotoxins with cysteine framework V (for examples, see AC P0DQQ7 and AC P81755). Expressed by the venom duct.

Its subcellular location is the secreted. In Conus virgo (Virgin cone), this protein is Conotoxin Vi5.1a.